Here is a 450-residue protein sequence, read N- to C-terminus: Phosphoglucosamine mutase (450 aa).

The active-site Phosphoserine intermediate is Ser104. 4 residues coordinate Mg(2+): Ser104, Asp241, Asp243, and Asp245. Ser104 carries the phosphoserine modification.

The protein belongs to the phosphohexose mutase family. The cofactor is Mg(2+). In terms of processing, activated by phosphorylation.

The catalysed reaction is alpha-D-glucosamine 1-phosphate = D-glucosamine 6-phosphate. Its function is as follows. Catalyzes the conversion of glucosamine-6-phosphate to glucosamine-1-phosphate. This is Phosphoglucosamine mutase from Renibacterium salmoninarum (strain ATCC 33209 / DSM 20767 / JCM 11484 / NBRC 15589 / NCIMB 2235).